We begin with the raw amino-acid sequence, 441 residues long: Protein translocase subunit SecY (441 aa).

A run of 10 helical transmembrane segments spans residues 25-45 (YFVI…IPGI), 78-98 (IFAL…ILTL), 126-146 (LILA…IPGL), 155-175 (ISFY…LMWL), 184-204 (IGNG…PSSF), 218-238 (VLLF…VVYI), 275-295 (VIPA…ASWF), 318-338 (YILT…GLAF), 376-396 (FLGS…RFFM), and 398-418 (VPFY…IDFI).

This sequence belongs to the SecY/SEC61-alpha family. Component of the Sec protein translocase complex. Heterotrimer consisting of SecY, SecE and SecG subunits. The heterotrimers can form oligomers, although 1 heterotrimer is thought to be able to translocate proteins. Interacts with the ribosome. Interacts with SecDF, and other proteins may be involved. Interacts with SecA.

The protein resides in the cell membrane. The central subunit of the protein translocation channel SecYEG. Consists of two halves formed by TMs 1-5 and 6-10. These two domains form a lateral gate at the front which open onto the bilayer between TMs 2 and 7, and are clamped together by SecE at the back. The channel is closed by both a pore ring composed of hydrophobic SecY resides and a short helix (helix 2A) on the extracellular side of the membrane which forms a plug. The plug probably moves laterally to allow the channel to open. The ring and the pore may move independently. This is Protein translocase subunit SecY from Buchnera aphidicola subsp. Baizongia pistaciae (strain Bp).